A 254-amino-acid polypeptide reads, in one-letter code: Dihydroorotate dehydrogenase B (NAD(+)), electron transfer subunit (254 aa).

Residues 1–99 enclose the FAD-binding FR-type domain; that stretch reads MLQTEMKVIQ…LGPLGKGFDI (99 aa). FAD-binding positions include 50-53, 67-69, and 74-75; these read RPIS, LYR, and GT. Cys218, Cys223, Cys226, and Cys241 together coordinate [2Fe-2S] cluster.

Belongs to the PyrK family. In terms of assembly, heterotetramer of 2 PyrK and 2 PyrD type B subunits. [2Fe-2S] cluster serves as cofactor. It depends on FAD as a cofactor.

It participates in pyrimidine metabolism; UMP biosynthesis via de novo pathway; orotate from (S)-dihydroorotate (NAD(+) route): step 1/1. Responsible for channeling the electrons from the oxidation of dihydroorotate from the FMN redox center in the PyrD type B subunit to the ultimate electron acceptor NAD(+). The chain is Dihydroorotate dehydrogenase B (NAD(+)), electron transfer subunit from Listeria monocytogenes serotype 4b (strain F2365).